A 247-amino-acid chain; its full sequence is Tyrosine recombinase XerD-like (247 aa).

Residues 1 to 72 form the Core-binding (CB) domain; it reads MIKHIEAFLA…TVNQFLHYLY (72 aa). In terms of domain architecture, Tyr recombinase spans 91–247; that stretch reads STKVPFTYQL…PITLEKYYRL (157 aa). Arg-212 is a catalytic residue. Tyr-244 functions as the O-(3'-phospho-DNA)-tyrosine intermediate in the catalytic mechanism.

Belongs to the 'phage' integrase family. XerD-like subfamily.

It localises to the cytoplasm. In terms of biological role, putative tyrosine recombinase. Not involved in the cutting and rejoining of the recombining DNA molecules on dif(SL) site. The sequence is that of Tyrosine recombinase XerD-like from Streptococcus uberis (strain ATCC BAA-854 / 0140J).